The primary structure comprises 470 residues: Phosphoribosylamine--glycine ligase (470 aa).

The region spanning 115 to 354 (KDFLKRIGVP…MAEISMAVVE (240 aa)) is the ATP-grasp domain. Residue 142-203 (REKFNNGIVV…EERLRGIEVA (62 aa)) participates in ATP binding. Glu324 and Asn326 together coordinate Mg(2+).

The protein belongs to the GARS family. The cofactor is Mg(2+). Mn(2+) serves as cofactor.

It carries out the reaction 5-phospho-beta-D-ribosylamine + glycine + ATP = N(1)-(5-phospho-beta-D-ribosyl)glycinamide + ADP + phosphate + H(+). Its pathway is purine metabolism; IMP biosynthesis via de novo pathway; N(1)-(5-phospho-D-ribosyl)glycinamide from 5-phospho-alpha-D-ribose 1-diphosphate: step 2/2. The sequence is that of Phosphoribosylamine--glycine ligase (purD) from Archaeoglobus fulgidus (strain ATCC 49558 / DSM 4304 / JCM 9628 / NBRC 100126 / VC-16).